A 370-amino-acid polypeptide reads, in one-letter code: Pyrimidine monooxygenase RutA (370 aa).

FMN is bound by residues 49–50, Asn-115, Glu-124, 140–141, and Ser-190; these read IK and RY.

Belongs to the NtaA/SnaA/DszA monooxygenase family. RutA subfamily.

It carries out the reaction uracil + FMNH2 + NADH + O2 = (Z)-3-ureidoacrylate + FMN + NAD(+) + H2O + H(+). The enzyme catalyses thymine + FMNH2 + NADH + O2 = (Z)-2-methylureidoacrylate + FMN + NAD(+) + H2O + H(+). Functionally, catalyzes the pyrimidine ring opening between N-3 and C-4 by an unusual flavin hydroperoxide-catalyzed mechanism, adding oxygen atoms in the process to yield ureidoacrylate peracid, that immediately reacts with FMN forming ureidoacrylate and FMN-N(5)-oxide. The FMN-N(5)-oxide reacts spontaneously with NADH to produce FMN. Requires the flavin reductase RutF to regenerate FMN in vivo. The sequence is that of Pyrimidine monooxygenase RutA from Variovorax paradoxus (strain S110).